We begin with the raw amino-acid sequence, 442 residues long: tRNA-2-methylthio-N(6)-dimethylallyladenosine synthase (442 aa).

One can recognise an MTTase N-terminal domain in the interval 2 to 117 (KSLYIKTYGC…LPELIVKASR (116 aa)). Cysteine 11, cysteine 47, cysteine 80, cysteine 157, cysteine 161, and cysteine 164 together coordinate [4Fe-4S] cluster. The 232-residue stretch at 143 to 374 (NSQGSSAFLS…QKLINKQQLE (232 aa)) folds into the Radical SAM core domain. The TRAM domain maps to 377 to 441 (QSMVGKTIPV…QNSLLGRELQ (65 aa)).

This sequence belongs to the methylthiotransferase family. MiaB subfamily. Monomer. The cofactor is [4Fe-4S] cluster.

It localises to the cytoplasm. The catalysed reaction is N(6)-dimethylallyladenosine(37) in tRNA + (sulfur carrier)-SH + AH2 + 2 S-adenosyl-L-methionine = 2-methylsulfanyl-N(6)-dimethylallyladenosine(37) in tRNA + (sulfur carrier)-H + 5'-deoxyadenosine + L-methionine + A + S-adenosyl-L-homocysteine + 2 H(+). Catalyzes the methylthiolation of N6-(dimethylallyl)adenosine (i(6)A), leading to the formation of 2-methylthio-N6-(dimethylallyl)adenosine (ms(2)i(6)A) at position 37 in tRNAs that read codons beginning with uridine. The protein is tRNA-2-methylthio-N(6)-dimethylallyladenosine synthase of Wolbachia sp. subsp. Brugia malayi (strain TRS).